The following is a 418-amino-acid chain: AA14 family lytic polysaccharide monooxygenase B (418 aa).

A signal peptide spans 1 to 18 (MIPVFLAAVAAFLPLTSG). N-linked (GlcNAc...) asparagine glycosylation is found at asparagine 31, asparagine 94, and asparagine 151. Intrachain disulfides connect cysteine 85/cysteine 108, cysteine 127/cysteine 154, cysteine 171/cysteine 176, and cysteine 178/cysteine 200. 2 N-linked (GlcNAc...) asparagine glycosylation sites follow: asparagine 201 and asparagine 235. A disulfide bridge links cysteine 220 with cysteine 236. Positions 307–343 (AAATPAPSSSGSSPSSSSPGSSSTASTTSTSGPRPSA) are enriched in low complexity. A disordered region spans residues 307–364 (AAATPAPSSSGSSPSSSSPGSSSTASTTSTSGPRPSARGFRRSTGERPPTGVPTPRKS).

It belongs to the polysaccharide monooxygenase AA14 family. Cu(2+) is required as a cofactor.

Its subcellular location is the secreted. Lytic polysaccharide monooxygenase (LPMO) that oxidatively cleaves xylan with both C1 and C4 regioselectivity and that specifically targets the protective shield made by heteroxylans that cover cellulose microfibrils in wood. Catalysis by LPMOs requires the reduction of the active-site copper from Cu(II) to Cu(I) by a reducing agent and H(2)O(2) or O(2) as a cosubstrate. Cleavage occurs only when xylans are bound to cellulose and not when they are in solution. Increases the efficiency of wood saccharification through oxidative cleavage of highly refractory xylan-coated cellulose fibers via synergistic relationship with xylan-active enzymes, xylobiohydrolases and cellobiohydrolases. This Trametes coccinea (strain BRFM310) (Pycnoporus coccineus) protein is AA14 family lytic polysaccharide monooxygenase B.